An 860-amino-acid polypeptide reads, in one-letter code: Leucine--tRNA ligase (860 aa).

The 'HIGH' region motif lies at 42 to 52; sequence PYPSGRLHMGH. A 'KMSKS' region motif is present at residues 619 to 623; sequence KMSKS. Residue Lys-622 participates in ATP binding.

The protein belongs to the class-I aminoacyl-tRNA synthetase family.

The protein resides in the cytoplasm. The enzyme catalyses tRNA(Leu) + L-leucine + ATP = L-leucyl-tRNA(Leu) + AMP + diphosphate. This chain is Leucine--tRNA ligase, found in Pectobacterium atrosepticum (strain SCRI 1043 / ATCC BAA-672) (Erwinia carotovora subsp. atroseptica).